A 517-amino-acid polypeptide reads, in one-letter code: Xaa-Pro dipeptidase (517 aa).

Mn(2+) contacts are provided by aspartate 244, aspartate 255, histidine 336, glutamate 381, and glutamate 420.

It belongs to the peptidase M24B family. Bacterial-type prolidase subfamily. As to quaternary structure, monomer. Requires Mn(2+) as cofactor.

The catalysed reaction is Xaa-L-Pro dipeptide + H2O = an L-alpha-amino acid + L-proline. It carries out the reaction diisopropyl fluorophosphate + H2O = diisopropyl phosphate + fluoride + 2 H(+). The enzyme catalyses An aryl dialkyl phosphate + H2O = dialkyl phosphate + an aryl alcohol.. Functionally, splits dipeptides with a prolyl or hydroxyprolyl residue in the C-terminal position and a nonpolar amino acid at the N-terminal position. Also catalyzes the hydrolysis of toxic organophosphorus cholinesterase-inhibiting compounds including insecticide paraoxon and nerve gases such as diisopropylfluorophosphate (DFP), O-isopropyl methylphosphonofluoridate (sarin), O-pinacolyl methylphosphonofluoridate (soman), and O-cyclohexyl methylphosphonofluoridate. The sequence is that of Xaa-Pro dipeptidase (pepQ) from Alteromonas sp.